A 100-amino-acid chain; its full sequence is Small ubiquitin-related modifier 1 (100 aa).

The Ubiquitin-like domain occupies 19 to 96 (EYIKLKVIGQ…IEVYQEQTGG (78 aa)). A Glycyl lysine isopeptide (Gly-Lys) (interchain with K-? in acceptor proteins) cross-link involves residue glycine 96. A propeptide spanning residues 97-100 (CRND) is cleaved from the precursor.

Belongs to the ubiquitin family. SUMO subfamily. As to quaternary structure, interacts with sae2, ube2i, ranbp2, pias1 and pias2. Covalently attached to a number of proteins. Post-translationally, cleavage of precursor form by a sentrin-specific protease is necessary for function.

It is found in the nucleus membrane. The protein localises to the nucleus speckle. The protein resides in the cytoplasm. Its subcellular location is the nucleus. It localises to the PML body. It is found in the cell membrane. Functionally, ubiquitin-like protein that can be covalently attached to proteins as a monomer or a lysine-linked polymer. Covalent attachment via an isopeptide bond to its substrates requires prior activation by the E1 complex sae1-sae2 and linkage to the E2 enzyme ube2i. This post-translational modification on lysine residues of proteins plays a crucial role in a number of cellular processes such as nuclear transport, DNA replication and repair, mitosis and signal transduction. Polymeric sumo1 chains are also susceptible to polyubiquitination which functions as a signal for proteasomal degradation of modified proteins. In Danio rerio (Zebrafish), this protein is Small ubiquitin-related modifier 1 (sumo1).